The sequence spans 493 residues: Glutamate--tRNA ligase (493 aa).

Residues 10–20 carry the 'HIGH' region motif; that stretch reads PSPTGDPHVGT. A 'KMSKS' region motif is present at residues 251-255; the sequence is KLSKR. Lys254 serves as a coordination point for ATP.

It belongs to the class-I aminoacyl-tRNA synthetase family. Glutamate--tRNA ligase type 1 subfamily. In terms of assembly, monomer.

It localises to the cytoplasm. It catalyses the reaction tRNA(Glu) + L-glutamate + ATP = L-glutamyl-tRNA(Glu) + AMP + diphosphate. Functionally, catalyzes the attachment of glutamate to tRNA(Glu) in a two-step reaction: glutamate is first activated by ATP to form Glu-AMP and then transferred to the acceptor end of tRNA(Glu). The polypeptide is Glutamate--tRNA ligase (Pseudomonas entomophila (strain L48)).